We begin with the raw amino-acid sequence, 138 residues long: Eukaryotic translation initiation factor 1A (138 aa).

Residues 1-15 (MPKNKGKGGKNRRRG) are compositionally biased toward basic residues. The disordered stretch occupies residues 1–28 (MPKNKGKGGKNRRRGKNENENEKRELTY). The segment covering 16–27 (KNENENEKRELT) has biased composition (basic and acidic residues). The region spanning 22 to 96 (EKRELTYAEE…EKGDVILKYT (75 aa)) is the S1-like domain.

This sequence belongs to the eIF-1A family.

Seems to be required for maximal rate of protein biosynthesis. Enhances ribosome dissociation into subunits and stabilizes the binding of the initiator Met-tRNA(I) to 40 S ribosomal subunits. The protein is Eukaryotic translation initiation factor 1A (tif11) of Schizosaccharomyces pombe (strain 972 / ATCC 24843) (Fission yeast).